Reading from the N-terminus, the 524-residue chain is Leukotriene-B4 omega-hydroxylase 3 (524 aa).

2 residues coordinate heme: Glu328 and Cys468.

Belongs to the cytochrome P450 family. Requires heme as cofactor.

It is found in the endoplasmic reticulum membrane. The protein localises to the microsome membrane. The catalysed reaction is leukotriene B4 + reduced [NADPH--hemoprotein reductase] + O2 = 20-hydroxy-leukotriene B4 + oxidized [NADPH--hemoprotein reductase] + H2O + H(+). It participates in lipid metabolism; leukotriene B4 degradation. Its function is as follows. Cytochromes P450 are a group of heme-thiolate monooxygenases. Catalyzes the omega-hydroxylation of LTB4. In Mus musculus (Mouse), this protein is Leukotriene-B4 omega-hydroxylase 3 (Cyp4f14).